The sequence spans 331 residues: 6-phosphogluconolactonase (331 aa).

K287 is modified (N6-acetyllysine).

Belongs to the cycloisomerase 2 family.

The catalysed reaction is 6-phospho-D-glucono-1,5-lactone + H2O = 6-phospho-D-gluconate + H(+). It participates in carbohydrate degradation; pentose phosphate pathway; D-ribulose 5-phosphate from D-glucose 6-phosphate (oxidative stage): step 2/3. Functionally, catalyzes the hydrolysis of 6-phosphogluconolactone to 6-phosphogluconate. This is 6-phosphogluconolactonase from Escherichia coli O127:H6 (strain E2348/69 / EPEC).